Here is a 354-residue protein sequence, read N- to C-terminus: MNGTEGPNFYIPMSNKTGVVRSPFEYPQYYLAEPWKYSILAAYMFLLILLGFPINFMTLYVTIQHKKLRTPLNYILLNLAFANHFMVLCGFTITLYTSLHGYFVFGQSGCYFEGFFATLGGEIALWSLVALAIERYIVVCKPMSNFRFGENHAMMGVAFTWIMALACAVPPLFGWSRYIPEGMQCSCGVDYYTLKPEINNESFVIYMFVVHFLIPLIIITFCYGRLVCTVKEAAAQQQESATTQKAEKEVTRMVIIMVIFFLICWVPYAYVAFYIFCNQGSEFGPIFMTVPAFFAKSSAIYNPVIYIMLNKQFRNCMITTLCCGKNPFGDDDASSAATSKTEATSVSTSQVSPA.

The Extracellular segment spans residues 1-36; that stretch reads MNGTEGPNFYIPMSNKTGVVRSPFEYPQYYLAEPWK. Asparagine 2 and asparagine 15 each carry an N-linked (GlcNAc...) asparagine glycan. The helical transmembrane segment at 37 to 61 threads the bilayer; that stretch reads YSILAAYMFLLILLGFPINFMTLYV. Topologically, residues 62–73 are cytoplasmic; that stretch reads TIQHKKLRTPLN. A helical transmembrane segment spans residues 74 to 96; the sequence is YILLNLAFANHFMVLCGFTITLY. The Extracellular segment spans residues 97 to 110; it reads TSLHGYFVFGQSGC. Cysteine 110 and cysteine 187 are joined by a disulfide. Residues 111–133 traverse the membrane as a helical segment; sequence YFEGFFATLGGEIALWSLVALAI. The 'Ionic lock' involved in activated form stabilization signature appears at 134–136; sequence ERY. The Cytoplasmic segment spans residues 134–152; it reads ERYIVVCKPMSNFRFGENH. Residues 153-173 traverse the membrane as a helical segment; sequence AMMGVAFTWIMALACAVPPLF. Residues 174–202 lie on the Extracellular side of the membrane; sequence GWSRYIPEGMQCSCGVDYYTLKPEINNES. The chain crosses the membrane as a helical span at residues 203–224; it reads FVIYMFVVHFLIPLIIITFCYG. Residues 225–252 lie on the Cytoplasmic side of the membrane; that stretch reads RLVCTVKEAAAQQQESATTQKAEKEVTR. Residues 253–274 traverse the membrane as a helical segment; the sequence is MVIIMVIFFLICWVPYAYVAFY. Residues 275-286 lie on the Extracellular side of the membrane; the sequence is IFCNQGSEFGPI. Residues 287 to 308 traverse the membrane as a helical segment; it reads FMTVPAFFAKSSAIYNPVIYIM. Lysine 296 is modified (N6-(retinylidene)lysine). The Cytoplasmic portion of the chain corresponds to 309–354; it reads LNKQFRNCMITTLCCGKNPFGDDDASSAATSKTEATSVSTSQVSPA. Residues cysteine 322 and cysteine 323 are each lipidated (S-palmitoyl cysteine). Positions 332–354 are disordered; sequence DASSAATSKTEATSVSTSQVSPA. The segment covering 334-354 has biased composition (low complexity); the sequence is SSAATSKTEATSVSTSQVSPA.

This sequence belongs to the G-protein coupled receptor 1 family. Opsin subfamily. In terms of processing, contains one covalently linked retinal chromophore. Upon light absorption, the covalently bound 11-cis-retinal is converted to all-trans-retinal. After hydrolysis of the Schiff base and release of the covalently bound all-trans-retinal, active rhodopsin is regenerated by binding of a fresh molecule of 11-cis-retinal.

The protein resides in the membrane. It is found in the cell projection. Its subcellular location is the cilium. It localises to the photoreceptor outer segment. Functionally, photoreceptor required for image-forming vision at low light intensity. Required for photoreceptor cell viability after birth. Light-induced isomerization of 11-cis to all-trans retinal triggers a conformational change that activates signaling via G-proteins. Subsequent receptor phosphorylation mediates displacement of the bound G-protein alpha subunit by arrestin and terminates signaling. The sequence is that of Rhodopsin (RHO) from Rana temporaria (European common frog).